Reading from the N-terminus, the 224-residue chain is ATP synthase subunit a (224 aa).

6 helical membrane passes run 17-37, 72-92, 99-119, 125-145, 170-190, and 195-215; these read LSLN…IYWL, IFIS…FPYI, LTLT…YGWI, MFAH…MVCI, LLLT…VTFL, and IALL…FAVL.

It belongs to the ATPase A chain family. F-type ATPases have 2 components, CF(1) - the catalytic core - and CF(0) - the membrane proton channel. CF(1) has five subunits: alpha(3), beta(3), gamma(1), delta(1), epsilon(1). CF(0) has three main subunits: a, b and c.

The protein localises to the mitochondrion inner membrane. In terms of biological role, mitochondrial membrane ATP synthase (F(1)F(0) ATP synthase or Complex V) produces ATP from ADP in the presence of a proton gradient across the membrane which is generated by electron transport complexes of the respiratory chain. F-type ATPases consist of two structural domains, F(1) - containing the extramembraneous catalytic core and F(0) - containing the membrane proton channel, linked together by a central stalk and a peripheral stalk. During catalysis, ATP synthesis in the catalytic domain of F(1) is coupled via a rotary mechanism of the central stalk subunits to proton translocation. Key component of the proton channel; it may play a direct role in the translocation of protons across the membrane. The chain is ATP synthase subunit a (mt:ATPase6) from Drosophila mauritiana (Fruit fly).